An 888-amino-acid polypeptide reads, in one-letter code: Aconitate hydratase A (888 aa).

Cysteine 433, cysteine 499, and cysteine 502 together coordinate [4Fe-4S] cluster.

It belongs to the aconitase/IPM isomerase family. As to quaternary structure, monomer. [4Fe-4S] cluster is required as a cofactor.

The catalysed reaction is citrate = D-threo-isocitrate. The enzyme catalyses (2S,3R)-3-hydroxybutane-1,2,3-tricarboxylate = 2-methyl-cis-aconitate + H2O. The protein operates within carbohydrate metabolism; tricarboxylic acid cycle; isocitrate from oxaloacetate: step 2/2. It functions in the pathway organic acid metabolism; propanoate degradation. In terms of biological role, involved in the catabolism of short chain fatty acids (SCFA) via the tricarboxylic acid (TCA)(acetyl degradation route) and probably the 2-methylcitrate cycle I (propionate degradation route). Catalyzes the reversible isomerization of citrate to isocitrate via cis-aconitate. Could catalyze the hydration of 2-methyl-cis-aconitate to yield (2R,3S)-2-methylisocitrate. The apo form of AcnA functions as a RNA-binding regulatory protein. This chain is Aconitate hydratase A (acn), found in Streptococcus mutans serotype c (strain ATCC 700610 / UA159).